Here is a 682-residue protein sequence, read N- to C-terminus: Glutamine--fructose-6-phosphate aminotransferase [isomerizing] 2 (682 aa).

Cys-2 functions as the For GATase activity in the catalytic mechanism. The 287-residue stretch at 2 to 288 (CGIFAYMNYR…DDDIAAVADG (287 aa)) folds into the Glutamine amidotransferase type-2 domain. The residue at position 244 (Ser-244) is a Phosphoserine. 2 consecutive SIS domains span residues 360 to 499 (HLKE…DRIS) and 531 to 672 (LALE…VDFP). Substrate-binding positions include 377-378 (TS), 422-424 (SQS), Thr-427, and His-578.

In terms of tissue distribution, highest levels of expression in heart, placenta, and spinal cord.

The enzyme catalyses D-fructose 6-phosphate + L-glutamine = D-glucosamine 6-phosphate + L-glutamate. It functions in the pathway nucleotide-sugar biosynthesis; UDP-N-acetyl-alpha-D-glucosamine biosynthesis; alpha-D-glucosamine 6-phosphate from D-fructose 6-phosphate: step 1/1. In terms of biological role, controls the flux of glucose into the hexosamine pathway. Most likely involved in regulating the availability of precursors for N- and O-linked glycosylation of proteins. The polypeptide is Glutamine--fructose-6-phosphate aminotransferase [isomerizing] 2 (GFPT2) (Homo sapiens (Human)).